The primary structure comprises 351 residues: Increased glyphosate resistance protein (351 aa).

The span at 1-18 (MHREDDSTSTGRREERLS) shows a compositional bias: basic and acidic residues. The segment at 1–29 (MHREDDSTSTGRREERLSTGKGDSLQPGP) is disordered.

In terms of biological role, confers an increase in glyphosate resistance when expressed in E.coli. The chain is Increased glyphosate resistance protein from Pseudomonas sp. (strain PG2982).